An 86-amino-acid chain; its full sequence is Large ribosomal subunit protein bL27 (86 aa).

Positions 1–23 (MAHKKAGGSTRNGRDSESKRLGV) are disordered.

The protein belongs to the bacterial ribosomal protein bL27 family.

This chain is Large ribosomal subunit protein bL27, found in Alkalilimnicola ehrlichii (strain ATCC BAA-1101 / DSM 17681 / MLHE-1).